Here is a 327-residue protein sequence, read N- to C-terminus: Ribosomal RNA small subunit methyltransferase H (327 aa).

Residues 42–44 (GGH), D61, L95, D109, and Q116 each bind S-adenosyl-L-methionine.

Belongs to the methyltransferase superfamily. RsmH family.

It is found in the cytoplasm. It carries out the reaction cytidine(1402) in 16S rRNA + S-adenosyl-L-methionine = N(4)-methylcytidine(1402) in 16S rRNA + S-adenosyl-L-homocysteine + H(+). Functionally, specifically methylates the N4 position of cytidine in position 1402 (C1402) of 16S rRNA. The protein is Ribosomal RNA small subunit methyltransferase H of Desulfovibrio desulfuricans (strain ATCC 27774 / DSM 6949 / MB).